A 577-amino-acid polypeptide reads, in one-letter code: Arginine--tRNA ligase (577 aa).

The 'HIGH' region motif lies at 122–132 (PNVAKEMHVGH).

The protein belongs to the class-I aminoacyl-tRNA synthetase family. In terms of assembly, monomer.

It is found in the cytoplasm. The catalysed reaction is tRNA(Arg) + L-arginine + ATP = L-arginyl-tRNA(Arg) + AMP + diphosphate. The sequence is that of Arginine--tRNA ligase from Escherichia coli O7:K1 (strain IAI39 / ExPEC).